A 324-amino-acid polypeptide reads, in one-letter code: MKPSIILYKTLPDDLLHRLEAHFTVTQVPNLHPETVARHAQAFSSAQGLLGASETVNRALLEKMSALRAASTISVGYDNVEVDALTARKIVLMHTPAVLTETVADTVMALMLATARRVVDVAERVKAGEWTESIGPAWFGVDVHHKTLGIVGMGRIGMALAQRAHFGFTMPVLYHARRRHQEAEDRFNARYCDLDTLLQEADFVCVILPLTAETRHLFGATQFARMKSSAIFINAGRGPVVDENALIAALQNGEIYAAGLDVFEQEPLSVDSPLLNMSNVVAVPHIGSATHETRYNMMACAVDNLIDALQGKIEKNCVNPQAAG.

Catalysis depends on residues Arg-237 and Glu-266. Catalysis depends on His-285, which acts as the Proton donor.

The protein belongs to the D-isomer specific 2-hydroxyacid dehydrogenase family. GhrB subfamily. In terms of assembly, homodimer.

The protein resides in the cytoplasm. It catalyses the reaction glycolate + NADP(+) = glyoxylate + NADPH + H(+). The enzyme catalyses (R)-glycerate + NAD(+) = 3-hydroxypyruvate + NADH + H(+). The catalysed reaction is (R)-glycerate + NADP(+) = 3-hydroxypyruvate + NADPH + H(+). Catalyzes the NADPH-dependent reduction of glyoxylate and hydroxypyruvate into glycolate and glycerate, respectively. The chain is Glyoxylate/hydroxypyruvate reductase B from Salmonella schwarzengrund (strain CVM19633).